We begin with the raw amino-acid sequence, 338 residues long: Large ribosomal subunit protein uL10 (338 aa).

The interval 303–338 (VEVSAAPAAEEEKEEEKKEEEKKEEDTGAAGLALLF) is disordered. A compositionally biased stretch (basic and acidic residues) spans 317–328 (EEKKEEEKKEED).

This sequence belongs to the universal ribosomal protein uL10 family. As to quaternary structure, part of the 50S ribosomal subunit. Forms part of the ribosomal stalk which helps the ribosome interact with GTP-bound translation factors. Forms a heptameric L10(L12)2(L12)2(L12)2 complex, where L10 forms an elongated spine to which the L12 dimers bind in a sequential fashion.

In terms of biological role, forms part of the ribosomal stalk, playing a central role in the interaction of the ribosome with GTP-bound translation factors. The sequence is that of Large ribosomal subunit protein uL10 from Methanocaldococcus jannaschii (strain ATCC 43067 / DSM 2661 / JAL-1 / JCM 10045 / NBRC 100440) (Methanococcus jannaschii).